Here is a 374-residue protein sequence, read N- to C-terminus: MSDKTKNTKPVAELSVEQVKEALIEEGKKKGILTYAKIAARLAPFTLDSDQMDEYLEHVGEAGIEVSDDADDEDPDETELVKEETESFDLTDMSVPPGVKINDPVRMYLKEIGRVDLLTADEEIALAKRIEAGDIEAKGRLAEANLRLVVSIAKRYVGRGMLFLDLIQEGNMGLMKAVEKFDFNKGFKFSTYATWWIRQAITRAIADQARTIRIPVHMVETINKLIRVQRSLLQDLGRDPSPEEIGEEMDLPTEKVREILKIAQEPVSLETPIGEEDDSHLGDFIEDQDATSPSDHAAYELLKEQLEDVLDTLTDREENVLRLRFGLDDGRTRTLEEVGRVFGVTRERIRQIEAKALRKLRHPSRSKQLKDFLE.

Residues 141–211 are sigma-70 factor domain-2; sequence LAEANLRLVV…TRAIADQART (71 aa). The short motif at 165-168 is the Interaction with polymerase core subunit RpoC element; that stretch reads DLIQ. Residues 220-296 form a sigma-70 factor domain-3 region; that stretch reads ETINKLIRVQ…DQDATSPSDH (77 aa). The sigma-70 factor domain-4 stretch occupies residues 309 to 362; it reads VLDTLTDREENVLRLRFGLDDGRTRTLEEVGRVFGVTRERIRQIEAKALRKLRH. Residues 335–354 constitute a DNA-binding region (H-T-H motif); it reads LEEVGRVFGVTRERIRQIEA.

The protein belongs to the sigma-70 factor family. RpoD/SigA subfamily. Interacts transiently with the RNA polymerase catalytic core.

The protein resides in the cytoplasm. In terms of biological role, sigma factors are initiation factors that promote the attachment of RNA polymerase to specific initiation sites and are then released. This sigma factor is the primary sigma factor during exponential growth. This Listeria monocytogenes serovar 1/2a (strain ATCC BAA-679 / EGD-e) protein is RNA polymerase sigma factor SigA.